Reading from the N-terminus, the 422-residue chain is Glycine amidinotransferase, mitochondrial (422 aa).

Catalysis depends on residues aspartate 253 and histidine 302. Residue cysteine 406 is the Amidino-cysteine intermediate of the active site.

This sequence belongs to the amidinotransferase family. In terms of assembly, homodimer. As to expression, strongly expressed in neurons and glia of the brain, the lamina propria, submucosa and serosa of the small intestine, in oocytes and on the fringes of the pancreas. Not expressed in the retina, eye lens, heart or bulbus arteriosus. Expressed in the yolk syncytial layer in gastrula stage embryos, in the yolk syncytial layer and mature somites in early segmentation embryos and in the yolk syncytial layer and the liver of long-pec stage (48 hours post-fertilization) embryos.

The protein resides in the mitochondrion inner membrane. The catalysed reaction is L-arginine + glycine = guanidinoacetate + L-ornithine. It participates in amine and polyamine biosynthesis; creatine biosynthesis; creatine from L-arginine and glycine: step 1/2. Catalyzes the biosynthesis of guanidinoacetate, the immediate precursor of creatine. Creatine plays a vital role in energy metabolism in muscle tissues. May play a role in embryonic and central nervous system development. This chain is Glycine amidinotransferase, mitochondrial, found in Danio rerio (Zebrafish).